An 850-amino-acid polypeptide reads, in one-letter code: Bifunctional levopimaradiene synthase, chloroplastic (850 aa).

Residues 1–52 (MALPSSSLSSQIHTGATTQCIPHFHGSLNAGTSAGKRRSLYLRWGKGPSKIV) constitute a chloroplast transit peptide. A substrate-binding site is contributed by Lys250. Asp383 and Asp385 together coordinate Mg(2+). The short motif at 383–386 (DIDD) is the DXDD motif element. Position 470 (Lys470) interacts with substrate. Residues Asp602, Asp606, Asn746, Thr750, and Glu754 each coordinate Mg(2+). A DDXXD motif motif is present at residues 602 to 606 (DDLYD).

The protein belongs to the terpene synthase family. Tpsd subfamily. It depends on Mg(2+) as a cofactor.

Its subcellular location is the plastid. It localises to the chloroplast. The catalysed reaction is (2E,6E,10E)-geranylgeranyl diphosphate = (+)-copalyl diphosphate. The enzyme catalyses (+)-copalyl diphosphate = abieta-7,13-diene + diphosphate. It catalyses the reaction (+)-copalyl diphosphate = abieta-8(14),12-diene + diphosphate. It carries out the reaction (+)-copalyl diphosphate = neoabietadiene + diphosphate. It participates in terpene metabolism; oleoresin biosynthesis. Its function is as follows. Involved in defensive oleoresin formation in conifers in response to insect attack or other injury. Involved in diterpene (C20) olefins biosynthesis. Bifunctional enzyme that catalyzes two sequential cyclizations of geranylgeranyl diphosphate (GGPP) to levopimaradiene. Levopimaradiene is the major products of the enzyme with abietadiene and neoabietadiene. No activity with farnesyl diphosphate (FPP) as substrate. This is Bifunctional levopimaradiene synthase, chloroplastic from Pinus contorta (Shore pine).